A 101-amino-acid chain; its full sequence is Small ribosomal subunit protein uS14 (101 aa).

Residues 1–26 (MAKVSSIQKNKSRQKKSQSLHNKRSE) are disordered. Over residues 10–22 (NKSRQKKSQSLHN) the composition is skewed to basic residues.

Belongs to the universal ribosomal protein uS14 family. Part of the 30S ribosomal subunit. Contacts proteins S3 and S10.

Its function is as follows. Binds 16S rRNA, required for the assembly of 30S particles and may also be responsible for determining the conformation of the 16S rRNA at the A site. This Rickettsia prowazekii (strain Madrid E) protein is Small ribosomal subunit protein uS14.